The chain runs to 471 residues: Arginine biosynthesis bifunctional protein ArgJ, mitochondrial (471 aa).

Substrate is bound by residues T201, K230, T241, E328, N466, and T471. T241 functions as the Nucleophile in the catalytic mechanism.

It belongs to the ArgJ family. As to quaternary structure, heterodimer of an alpha and a beta chain. Post-translationally, the alpha and beta chains are autoproteolytically processed from a single precursor protein within the mitochondrion.

Its subcellular location is the mitochondrion matrix. It carries out the reaction N(2)-acetyl-L-ornithine + L-glutamate = N-acetyl-L-glutamate + L-ornithine. It catalyses the reaction L-glutamate + acetyl-CoA = N-acetyl-L-glutamate + CoA + H(+). It functions in the pathway amino-acid biosynthesis; L-arginine biosynthesis; L-ornithine and N-acetyl-L-glutamate from L-glutamate and N(2)-acetyl-L-ornithine (cyclic): step 1/1. It participates in amino-acid biosynthesis; L-arginine biosynthesis; N(2)-acetyl-L-ornithine from L-glutamate: step 1/4. Catalyzes two activities which are involved in the cyclic version of arginine biosynthesis: the synthesis of acetylglutamate from glutamate and acetyl-CoA, and of ornithine by transacetylation between acetylornithine and glutamate. In Ajellomyces capsulatus (strain NAm1 / WU24) (Darling's disease fungus), this protein is Arginine biosynthesis bifunctional protein ArgJ, mitochondrial.